We begin with the raw amino-acid sequence, 196 residues long: Orotate phosphoribosyltransferase (196 aa).

Glutamate 117–serine 125 contacts 5-phospho-alpha-D-ribose 1-diphosphate. Orotate-binding residues include threonine 121 and arginine 149.

This sequence belongs to the purine/pyrimidine phosphoribosyltransferase family. PyrE subfamily. As to quaternary structure, homodimer. Requires Mg(2+) as cofactor.

It carries out the reaction orotidine 5'-phosphate + diphosphate = orotate + 5-phospho-alpha-D-ribose 1-diphosphate. The protein operates within pyrimidine metabolism; UMP biosynthesis via de novo pathway; UMP from orotate: step 1/2. In terms of biological role, catalyzes the transfer of a ribosyl phosphate group from 5-phosphoribose 1-diphosphate to orotate, leading to the formation of orotidine monophosphate (OMP). The sequence is that of Orotate phosphoribosyltransferase from Sphingopyxis alaskensis (strain DSM 13593 / LMG 18877 / RB2256) (Sphingomonas alaskensis).